The chain runs to 259 residues: Probable ABC transporter permease protein RP096 (259 aa).

Helical transmembrane passes span 13–35 (TIKFAQSVGIFSLFSFIAISSII), 49–69 (LFIGFHSLPVVAMTTFFSGAV), 148–168 (VIAAIITMPCLVLIGDIIGVM), 195–215 (PIDVISGLIKATVFGFIISII), and 237–257 (AVVNSSILILISNYLITELFF).

The protein belongs to the MlaE permease family.

The protein localises to the cell inner membrane. Functionally, could be part of an ABC transporter complex. This is Probable ABC transporter permease protein RP096 from Rickettsia prowazekii (strain Madrid E).